The sequence spans 153 residues: Natriuretic peptides A (153 aa).

The N-terminal stretch at 1-25 is a signal peptide; that stretch reads MGSFSTITASFLLFLACQLLWQTGA. Propeptides lie at residues 26 to 123 and 93 to 103; these read NPVY…AAPR and DGGALGRGSWD. Residues 62–104 form a disordered region; the sequence is VLSEQNEEAGAALSPLPEVPPWAGEVNPAQRDGGALGRGSWDS. The residue at position 129 (Ser-129) is a Phosphoserine. The cysteines at positions 130 and 146 are disulfide-linked. Residues 147-151 are important for degradation of atrial natriuretic peptide by IDE; the sequence is NSFRY.

The protein belongs to the natriuretic peptide family. In terms of assembly, homodimer; disulfide-linked antiparallel dimer. In terms of processing, the precursor molecule is proteolytically cleaved by CORIN at Arg-123 to produce the atrial natriuretic peptide. Undergoes further proteolytic cleavage by unknown proteases to give rise to long-acting natriuretic peptide, vessel dilator and kaliuretic peptide. Additional processing gives rise to the auriculin and atriopeptin peptides. In the kidneys, alternative processing by an unknown protease results in the peptide urodilatin. Cleavage by MME initiates degradation of the factor and thereby regulates its activity. Degradation by IDE results in reduced activation of NPR1 (in vitro). During IDE degradation, the resulting products can temporarily stimulate NPR2 to produce cGMP, before the fragments are completely degraded and inactivated by IDE (in vitro). Post-translationally, degraded by IDE. In terms of processing, phosphorylation on Ser-129 decreases vasorelaxant activity.

Its subcellular location is the secreted. The protein resides in the perikaryon. It localises to the cell projection. Its function is as follows. Hormone that plays a key role in mediating cardio-renal homeostasis, and is involved in vascular remodeling and regulating energy metabolism. Acts by specifically binding and stimulating NPR1 to produce cGMP, which in turn activates effector proteins, such as PRKG1, that drive various biological responses. Regulates vasodilation, natriuresis, diuresis and aldosterone synthesis and is therefore essential for regulating blood pressure, controlling the extracellular fluid volume and maintaining the fluid-electrolyte balance. Also involved in inhibiting cardiac remodeling and cardiac hypertrophy by inducing cardiomyocyte apoptosis and attenuating the growth of cardiomyocytes and fibroblasts. Plays a role in female pregnancy by promoting trophoblast invasion and spiral artery remodeling in uterus, and thus prevents pregnancy-induced hypertension. In adipose tissue, acts in various cGMP- and PKG-dependent pathways to regulate lipid metabolism and energy homeostasis. This includes up-regulating lipid metabolism and mitochondrial oxygen utilization by activating the AMP-activated protein kinase (AMPK), and increasing energy expenditure by acting via MAPK11 to promote the UCP1-dependent thermogenesis of brown adipose tissue. Binds the clearance receptor NPR3 which removes the hormone from circulation. May have a role in cardio-renal homeostasis through regulation of natriuresis, diuresis, vasodilation, and inhibiting aldosterone synthesis. In vitro, promotes the production of cGMP and induces vasodilation. May promote natriuresis, at least in part, by enhancing prostaglandin E2 synthesis resulting in the inhibition of renal Na+-K+-ATPase. However reports on the involvement of this peptide in mammal blood volume and blood pressure homeostasis are conflicting; according to a report, in vivo it is not sufficient to activate cGMP and does not inhibit collecting duct transport nor effect diuresis and natriuresis. Appears to bind to specific receptors that are distinct from the receptors bound by atrial natriuretic peptide and vessel dilator. Possibly enhances protein excretion in urine by decreasing proximal tubular protein reabsorption. Functionally, may have a role in cardio-renal homeostasis through regulation of natriuresis, diuresis, and vasodilation. In vitro, promotes the production of cGMP and induces vasodilation. May promote natriuresis, at least in part, by enhancing prostaglandin E2 synthesis resulting in the inhibition of renal Na+-K+-ATPase. However reports on the involvement of this peptide in mammal blood volume and blood pressure homeostasis are conflicting; according to a report it is not sufficient to activate cGMP and does not inhibit collecting duct transport nor effect diuresis and natriuresis. Appears to bind to specific receptors that are distinct from the receptors bound by the atrial natriuretic and long-acting natriuretic peptides. Possibly functions in protein excretion in urine by maintaining the integrity of the proximal tubules and enhancing protein excretion by decreasing proximal tubular protein reabsorption. In terms of biological role, may have a role in cardio-renal homeostasis through regulation of diuresis and inhibiting aldosterone synthesis. In vitro, promotes the production of cGMP and induces vasodilation. May promote natriuresis, at least in part, by enhancing prostaglandin E2 synthesis resulting in the inhibition of renal Na+-K+-ATPase. May have a role in potassium excretion but not sodium excretion (natriuresis). Possibly enhances protein excretion in urine by decreasing proximal tubular protein reabsorption. Its function is as follows. Hormone produced in the kidneys that appears to be important for maintaining cardio-renal homeostasis. Mediates vasodilation, natriuresis and diuresis primarily in the renal system, in order to maintain the extracellular fluid volume and control the fluid-electrolyte balance. Specifically binds and stimulates cGMP production by renal transmembrane receptors, likely NPR1. Urodilatin not ANP, may be the natriuretic peptide responsible for the regulation of sodium and water homeostasis in the kidney. May have a role in cardio-renal homeostasis through regulation of natriuresis and vasodilation. In vivo promotes natriuresis and in vitro, vasodilates renal artery strips. Functionally, may have a role in cardio-renal homeostasis through regulation of regulation of natriuresis and vasodilation. In vivo promotes natriuresis. In vitro, vasodilates intestinal smooth muscle but not smooth muscle strips. In terms of biological role, may have a role in cardio-renal homeostasis through regulation of natriuresis and vasodilation. In vivo promotes natriuresis. In vitro, selectively vasodilates intestinal and vascular smooth muscle strips. Its function is as follows. May have a role in cardio-renal homeostasis through regulation of natriuresis and vasodilation. In vivo promotes natriuresis. In vitro, selectively vasodilates intestinal smooth muscle but not vascular smooth muscle strips. In Felis catus (Cat), this protein is Natriuretic peptides A (NPPA).